The following is a 60-amino-acid chain: Large ribosomal subunit protein bL32 (60 aa).

Residues 1-21 (MAVPARHTSKAKKNKRRTHYK) are disordered. Basic residues predominate over residues 7–20 (HTSKAKKNKRRTHY).

It belongs to the bacterial ribosomal protein bL32 family.

In Streptococcus equi subsp. zooepidemicus (strain H70), this protein is Large ribosomal subunit protein bL32.